The following is a 224-amino-acid chain: UPF0319 protein VC_1853 (224 aa).

A signal peptide spans 1–21; it reads MKLNPLILGLLLSFSAGHSLA.

It belongs to the UPF0319 family.

The protein is UPF0319 protein VC_1853 of Vibrio cholerae serotype O1 (strain ATCC 39315 / El Tor Inaba N16961).